We begin with the raw amino-acid sequence, 271 residues long: Tryptophan synthase alpha chain (271 aa).

Active-site proton acceptor residues include glutamate 49 and aspartate 60.

The protein belongs to the TrpA family. In terms of assembly, tetramer of two alpha and two beta chains.

The catalysed reaction is (1S,2R)-1-C-(indol-3-yl)glycerol 3-phosphate + L-serine = D-glyceraldehyde 3-phosphate + L-tryptophan + H2O. It participates in amino-acid biosynthesis; L-tryptophan biosynthesis; L-tryptophan from chorismate: step 5/5. The alpha subunit is responsible for the aldol cleavage of indoleglycerol phosphate to indole and glyceraldehyde 3-phosphate. This Blochmanniella floridana protein is Tryptophan synthase alpha chain.